The sequence spans 457 residues: RuvB-like helicase 1 (457 aa).

72 to 79 provides a ligand contact to ATP; it reads GAPGTGKT.

This sequence belongs to the RuvB family. In terms of assembly, may form heterododecamers with RVB2. Component of the SWR1 chromatin remodeling complex, the INO80 chromatin remodeling complex, and of the R2TP complex.

The protein localises to the nucleus. The enzyme catalyses ATP + H2O = ADP + phosphate + H(+). Functionally, DNA helicase which participates in several chromatin remodeling complexes, including the SWR1 and the INO80 complexes. The SWR1 complex mediates the ATP-dependent exchange of histone H2A for the H2A variant HZT1 leading to transcriptional regulation of selected genes by chromatin remodeling. The INO80 complex remodels chromatin by shifting nucleosomes and is involved in DNA repair. Also involved in pre-rRNA processing. This Debaryomyces hansenii (strain ATCC 36239 / CBS 767 / BCRC 21394 / JCM 1990 / NBRC 0083 / IGC 2968) (Yeast) protein is RuvB-like helicase 1 (RBV1).